The sequence spans 106 residues: Pyrimidine/purine nucleoside phosphorylase (106 aa).

Belongs to the nucleoside phosphorylase PpnP family.

It catalyses the reaction a purine D-ribonucleoside + phosphate = a purine nucleobase + alpha-D-ribose 1-phosphate. The enzyme catalyses adenosine + phosphate = alpha-D-ribose 1-phosphate + adenine. The catalysed reaction is cytidine + phosphate = cytosine + alpha-D-ribose 1-phosphate. It carries out the reaction guanosine + phosphate = alpha-D-ribose 1-phosphate + guanine. It catalyses the reaction inosine + phosphate = alpha-D-ribose 1-phosphate + hypoxanthine. The enzyme catalyses thymidine + phosphate = 2-deoxy-alpha-D-ribose 1-phosphate + thymine. The catalysed reaction is uridine + phosphate = alpha-D-ribose 1-phosphate + uracil. It carries out the reaction xanthosine + phosphate = alpha-D-ribose 1-phosphate + xanthine. Its function is as follows. Catalyzes the phosphorolysis of diverse nucleosides, yielding D-ribose 1-phosphate and the respective free bases. Can use uridine, adenosine, guanosine, cytidine, thymidine, inosine and xanthosine as substrates. Also catalyzes the reverse reactions. The sequence is that of Pyrimidine/purine nucleoside phosphorylase from Burkholderia ambifaria (strain ATCC BAA-244 / DSM 16087 / CCUG 44356 / LMG 19182 / AMMD) (Burkholderia cepacia (strain AMMD)).